The chain runs to 67 residues: Conotoxin VnMMSK-03 (67 aa).

The signal sequence occupies residues 1-20; it reads MMSKLGVVLTICLLPFPLTA. Residues 21-50 constitute a propeptide that is removed on maturation; sequence LPMDGDQPADLPALRTQDFEPERSPWFDPV. Cystine bridges form between C53-C65, C54-C61, and C58-C64. Residue P63 is modified to 4-hydroxyproline.

The protein belongs to the conotoxin M superfamily. Expressed by the venom duct.

It localises to the secreted. The protein is Conotoxin VnMMSK-03 of Conus ventricosus (Mediterranean cone).